Here is a 112-residue protein sequence, read N- to C-terminus: Secretoglobin family 2B member 24 (112 aa).

The signal sequence occupies residues 1–23 (MKGTLLLLALLMIGELGFHTTEA).

This sequence belongs to the secretoglobin family. As to expression, expressed in lacrimal gland, at higher level in males than females.

The protein localises to the secreted. In Mus musculus (Mouse), this protein is Secretoglobin family 2B member 24 (Scgb2b24).